A 119-amino-acid polypeptide reads, in one-letter code: MPRVKRGVTARARHKKVLTKAKGYYGARSRVFRVAKQAVIKAAQYAYRDRKQRKRQFRALWIVRINAAAREHGLSYSRLINGLMKASVAIDRKNLAELAVYDKAAFGKLAEKAKQALGG.

This sequence belongs to the bacterial ribosomal protein bL20 family.

Functionally, binds directly to 23S ribosomal RNA and is necessary for the in vitro assembly process of the 50S ribosomal subunit. It is not involved in the protein synthesizing functions of that subunit. The protein is Large ribosomal subunit protein bL20 of Coxiella burnetii (strain CbuK_Q154) (Coxiella burnetii (strain Q154)).